We begin with the raw amino-acid sequence, 373 residues long: uncharacterized protein (373 aa).

The WSC domain occupies 15-101; sequence DFTYLGCYSS…SDSYSVYVDE (87 aa). Disordered regions lie at residues 101–171, 183–210, and 291–316; these read ESEE…SSLS, FSFS…ITTS, and NLSE…RGAA. Low complexity-rich tracts occupy residues 110–171 and 183–204; these read SSAQ…SSLS and FSFS…SSES.

This is an uncharacterized protein from Pichia angusta (Yeast).